A 283-amino-acid chain; its full sequence is Probable replication-associated protein repA1 (283 aa).

Belongs to the IncFII RepA family.

Its function is as follows. This protein is essential for plasmid replication; it is involved in copy control functions. In Buchnera aphidicola subsp. Schizaphis graminum (strain Sg), this protein is Probable replication-associated protein repA1 (repA1).